A 755-amino-acid chain; its full sequence is Ribosome biogenesis protein BOP1 (755 aa).

Composition is skewed to polar residues over residues 1 to 10 (MSQEPSSSFS) and 43 to 61 (ELSSSSDNGDQGQPLTEPN). The segment at 1–65 (MSQEPSSSFS…PLTEPNNIPI (65 aa)) is disordered. Residues 309-754 (MDSMLPTLPN…SGTDGVLRLF (446 aa)) are interaction with EB1. The WD 1 repeat unit spans residues 335–374 (TGTRRINGLTFSPKGMFFAVGGRDCILRVFETYSGRQVRA). The tract at residues 482 to 505 (YNEGSEDDDAAESARFNEERHQRG) is disordered. Basic and acidic residues predominate over residues 496–505 (RFNEERHQRG). WD repeat units follow at residues 617 to 655 (PGVKQVTASGMGYGDNFITGSADSQCALFANAAGPEPTA), 659 to 698 (YHTSTIRNIDVHPCGGLVATCSDDGIVQISRIVDASLVKM), and 725 to 755 (DGSVGISRVTWHPRQPWLLCSGTDGVLRLFK).

The protein belongs to the WD repeat BOP1/ERB1 family. In terms of assembly, interacts (via C-terminal WD repeats) with giardin subunit beta. Interacts (via C-terminal WD repeats) with EB1.

The protein localises to the nucleus. It is found in the nucleolus. It localises to the nucleus membrane. Functionally, required for maturation of ribosomal RNAs and formation of the large ribosomal subunit. This Giardia intestinalis (Giardia lamblia) protein is Ribosome biogenesis protein BOP1.